We begin with the raw amino-acid sequence, 521 residues long: NADH-quinone oxidoreductase subunit N (521 aa).

14 helical membrane passes run 15–35 (LAPELILAAMFLILIVTDLIL), 43–63 (IIGWLSLAGLLLSLAAVIWRM), 98–118 (LLKIIFLIGTSLVVLLGLGST), 128–148 (AEFYYLLLPAAAGAMIMASSG), 150–170 (LVTLYIGLELLSITTYVLVGL), 185–205 (VVTGGIASAFVLFGMSYLYGV), 227–247 (ALVYVGFFFLIAGFGIKIAAA), 261–281 (PTPVSAFLAVIAKGAALAAVF), 303–323 (VFFALLVIAAAAMIAGTVSAL), 331–351 (LLALSGVANAGYLLVPIAISV), 363–383 (VFYLVAYLLMNVGAFAVVTVI), 406–426 (AAAMLIFILSFSGLPVTAGFF), 442–462 (WLVAIMVVSTVISYYFYFGII), and 485–505 (TVIWICAAATVALGVLPGPLM).

Belongs to the complex I subunit 2 family. NDH-1 is composed of 14 different subunits. Subunits NuoA, H, J, K, L, M, N constitute the membrane sector of the complex.

The protein resides in the cell membrane. The catalysed reaction is a quinone + NADH + 5 H(+)(in) = a quinol + NAD(+) + 4 H(+)(out). Functionally, NDH-1 shuttles electrons from NADH, via FMN and iron-sulfur (Fe-S) centers, to quinones in the respiratory chain. The immediate electron acceptor for the enzyme in this species is believed to be a menaquinone. Couples the redox reaction to proton translocation (for every two electrons transferred, four hydrogen ions are translocated across the cytoplasmic membrane), and thus conserves the redox energy in a proton gradient. The chain is NADH-quinone oxidoreductase subunit N from Paenibacillus sp. (strain JDR-2).